The primary structure comprises 296 residues: 4-hydroxy-tetrahydrodipicolinate synthase (296 aa).

A pyruvate-binding site is contributed by Thr47. Tyr135 serves as the catalytic Proton donor/acceptor. The active-site Schiff-base intermediate with substrate is Lys163. Position 205 (Ile205) interacts with pyruvate.

This sequence belongs to the DapA family. Homotetramer; dimer of dimers.

The protein resides in the cytoplasm. It carries out the reaction L-aspartate 4-semialdehyde + pyruvate = (2S,4S)-4-hydroxy-2,3,4,5-tetrahydrodipicolinate + H2O + H(+). It participates in amino-acid biosynthesis; L-lysine biosynthesis via DAP pathway; (S)-tetrahydrodipicolinate from L-aspartate: step 3/4. Catalyzes the condensation of (S)-aspartate-beta-semialdehyde [(S)-ASA] and pyruvate to 4-hydroxy-tetrahydrodipicolinate (HTPA). This chain is 4-hydroxy-tetrahydrodipicolinate synthase, found in Macrococcus caseolyticus (strain JCSC5402) (Macrococcoides caseolyticum).